The sequence spans 1399 residues: DNA-directed RNA polymerase subunit beta' (1399 aa).

The Zn(2+) site is built by Cys-70, Cys-72, Cys-85, and Cys-88. Positions 460, 462, and 464 each coordinate Mg(2+). Positions 814, 888, 895, and 898 each coordinate Zn(2+).

The protein belongs to the RNA polymerase beta' chain family. As to quaternary structure, the RNAP catalytic core consists of 2 alpha, 1 beta, 1 beta' and 1 omega subunit. When a sigma factor is associated with the core the holoenzyme is formed, which can initiate transcription. Mg(2+) serves as cofactor. Requires Zn(2+) as cofactor.

The enzyme catalyses RNA(n) + a ribonucleoside 5'-triphosphate = RNA(n+1) + diphosphate. DNA-dependent RNA polymerase catalyzes the transcription of DNA into RNA using the four ribonucleoside triphosphates as substrates. In Pseudomonas fluorescens (strain ATCC BAA-477 / NRRL B-23932 / Pf-5), this protein is DNA-directed RNA polymerase subunit beta'.